The primary structure comprises 280 residues: Ribosomal RNA-processing protein 7 homolog A (280 aa).

The RRM domain occupies 59–159 (RTLFVLNVPP…SGIHKWISDY (101 aa)). At Ser99 the chain carries Phosphoserine.

The protein belongs to the RRP7 family. Part of the small subunit (SSU) processome, composed of more than 70 proteins and the RNA chaperone small nucleolar RNA (snoRNA) U3. Interacts with NOL6; required for NOL6 localization to nucleolus. As to expression, expressed in the apical radial glial cells in the developing brain.

It is found in the nucleus. It localises to the nucleolus. The protein resides in the cell projection. Its subcellular location is the cilium. The protein localises to the cytoplasm. It is found in the cytoskeleton. It localises to the microtubule organizing center. The protein resides in the centrosome. In terms of biological role, nucleolar protein that is involved in ribosomal RNA (rRNA) processing. Also plays a role in primary cilia resorption, and cell cycle progression in neurogenesis and neocortex development. Part of the small subunit (SSU) processome, first precursor of the small eukaryotic ribosomal subunit. During the assembly of the SSU processome in the nucleolus, many ribosome biogenesis factors, an RNA chaperone and ribosomal proteins associate with the nascent pre-rRNA and work in concert to generate RNA folding, modifications, rearrangements and cleavage as well as targeted degradation of pre-ribosomal RNA by the RNA exosome. This chain is Ribosomal RNA-processing protein 7 homolog A, found in Homo sapiens (Human).